A 659-amino-acid polypeptide reads, in one-letter code: Forkhead box protein P1-B (659 aa).

Polar residues-rich tracts occupy residues 1 to 16 (MMQE…TAHQ) and 32 to 41 (KSTTPSSDIT). 2 disordered regions span residues 1–41 (MMQE…SDIT) and 229–263 (ENSV…NGQY). The C2H2-type zinc-finger motif lies at 289-314 (GVCKWPGCEAVFEDFQSFLKHLNNEH). The tract at residues 331–352 (VQQLELQLAKDKERLQAMMTHL) is leucine-zipper. The CTBP1-binding stretch occupies residues 365 to 369 (PLNLV). The tract at residues 379 to 413 (PAASPPLSLPQTPTTPTAPLTPLSQTHSVITPTSL) is disordered. The span at 387–404 (LPQTPTTPTAPLTPLSQT) shows a compositional bias: low complexity. A DNA-binding region (fork-head) is located at residues 448–538 (RPPFTYASLI…PQKISGSPAL (91 aa)). The disordered stretch occupies residues 590-659 (GAMDHGNSNG…EDDHGTEDML (70 aa)). Residues 595 to 605 (GNSNGSDSSPG) are compositionally biased toward polar residues. Basic and acidic residues predominate over residues 641-659 (PDFDHHRDYEDDHGTEDML).

In terms of tissue distribution, shows complex and dynamic expression during early embryonic development. Prominent in many regions of the developing central nervous system, particularly in midbrain-hindbrain boundary, hindbrain and spinal cord. Strongly expressed in the retina, ear, branchial arches, hatching gland, heart, pronephric duct, gut, proctodeum, pectoral fin and swim bladder.

It localises to the nucleus. Transcriptional repressor. This is Forkhead box protein P1-B (foxp1b) from Danio rerio (Zebrafish).